Reading from the N-terminus, the 28-residue chain is Conotoxin Cl6a (28 aa).

3 disulfide bridges follow: Cys3–Cys13, Cys7–Cys19, and Cys12–Cys24.

Expressed by the venom duct.

The protein localises to the secreted. This is Conotoxin Cl6a from Californiconus californicus (California cone).